Here is a 546-residue protein sequence, read N- to C-terminus: Hexose oxidase (546 aa).

In terms of domain architecture, FAD-binding PCMH-type spans 40–222 (IGTNIDFVYV…TKYYFKDLPM (183 aa)). A cross-link (6-(S-cysteinyl)-8alpha-(pros-histidyl)-FAD (His-Cys)) is located at residues 79–138 (HCYEDFVFDECVKAIINVTGLVESGYDDDRGYFVSSGDTNWGSFKTLFRDHGRVLPGGSC). 2 N-linked (GlcNAc...) asparagine glycosylation sites follow: N95 and N358.

The protein belongs to the oxygen-dependent FAD-linked oxidoreductase family. In terms of assembly, homodimer. It depends on FAD as a cofactor. Cleaved into 40 kDa and 29 kDa cleavage products, but the 2 polypeptide chains do not separate and seem to be physically linked together. Post-translationally, the FAD cofactor is bound via a bicovalent 6-S-cysteinyl, 8alpha-N1-histidyl FAD linkage.

The enzyme catalyses beta-D-glucose + O2 = D-glucono-1,5-lactone + H2O2. The catalysed reaction is D-galactose + O2 = D-galactono-1,5-lactone + H2O2. It catalyses the reaction D-maltose + O2 = D-maltobiono-1,5-lactone + H2O2. It carries out the reaction D-cellobiose + O2 = D-cellobiono-1,5-lactone + H2O2. The enzyme catalyses beta-lactose + O2 = lactobiono-1,5-lactone + H2O2. Catalyzes the selective oxidation of C1 hydroxyl moieties on mono- and disaccharides with concomitant reduction of molecular oxygen to hydrogen peroxide. This results in the formation of the corresponding lactones, which typically undergo spontaneous hydrolysis. Hexose oxidase is able to oxidize a variety of substrates including D-glucose, D-galactose, maltose, cellobiose, and lactose. In Chondrus crispus (Carrageen Irish moss), this protein is Hexose oxidase (HOX).